A 944-amino-acid chain; its full sequence is Neutral alpha-glucosidase AB (944 aa).

The signal sequence occupies residues 1–28 (MAAVAAVAARRRRSWASLVLAFLGVCLG). C41 and C47 are oxidised to a cystine. A Phosphoserine modification is found at S52. N-linked (GlcNAc...) asparagine glycosylation is present at N97. A disordered region spans residues 181–238 (QRAPRVSQGSKDPAEGDGAQPEETPRDGDKPEETQGKAEKDEPGAWEETFKTHSDSKP). Over residues 203–236 (ETPRDGDKPEETQGKAEKDEPGAWEETFKTHSDS) the composition is skewed to basic and acidic residues. Residues D283 and D429 each coordinate substrate. The Nucleophile role is filled by D542. Position 602 (R602) interacts with substrate. The active-site Proton donor is the D618. C633 and C644 are disulfide-bonded. Position 676 (H676) interacts with substrate.

This sequence belongs to the glycosyl hydrolase 31 family. As to quaternary structure, heterodimer of a catalytic alpha subunit (GANAB) and a beta subunit (PRKCSH). Binds glycosylated PTPRC. In terms of tissue distribution, detected in placenta. Isoform 1 and isoform 2 are expressed in the kidney and liver.

It is found in the endoplasmic reticulum. The protein localises to the golgi apparatus. Its subcellular location is the melanosome. The enzyme catalyses N(4)-(alpha-D-Glc-(1-&gt;3)-alpha-D-Man-(1-&gt;2)-alpha-D-Man-(1-&gt;2)-alpha-D-Man-(1-&gt;3)-[alpha-D-Man-(1-&gt;2)-alpha-D-Man-(1-&gt;3)-[alpha-D-Man-(1-&gt;2)-alpha-D-Man-(1-&gt;6)]-alpha-D-Man-(1-&gt;6)]-beta-D-Man-(1-&gt;4)-beta-D-GlcNAc-(1-&gt;4)-beta-D-GlcNAc)-L-asparaginyl-[protein] + H2O = N(4)-(alpha-D-Man-(1-&gt;2)-alpha-D-Man-(1-&gt;2)-alpha-D-Man-(1-&gt;3)-[alpha-D-Man-(1-&gt;2)-alpha-D-Man-(1-&gt;3)-[alpha-D-Man-(1-&gt;2)-alpha-D-Man-(1-&gt;6)]-alpha-D-Man-(1-&gt;6)]-beta-D-Man-(1-&gt;4)-beta-D-GlcNAc-(1-&gt;4)-beta-D-GlcNAc)-L-asparaginyl-[protein] (N-glucan mannose isomer 9A1,2,3B1,2,3) + beta-D-glucose. It carries out the reaction N(4)-(alpha-D-Glc-(1-&gt;3)-alpha-D-Glc-(1-&gt;3)-alpha-D-Man-(1-&gt;2)-alpha-D-Man-(1-&gt;2)-alpha-D-Man-(1-&gt;3)-[alpha-D-Man-(1-&gt;2)-alpha-D-Man-(1-&gt;3)-[alpha-D-Man-(1-&gt;2)-alpha-D-Man-(1-&gt;6)]-alpha-D-Man-(1-&gt;6)]-beta-D-Man-(1-&gt;4)-beta-D-GlcNAc-(1-&gt;4)-beta-D-GlcNAc)-L-asparaginyl-[protein] + H2O = N(4)-(alpha-D-Glc-(1-&gt;3)-alpha-D-Man-(1-&gt;2)-alpha-D-Man-(1-&gt;2)-alpha-D-Man-(1-&gt;3)-[alpha-D-Man-(1-&gt;2)-alpha-D-Man-(1-&gt;3)-[alpha-D-Man-(1-&gt;2)-alpha-D-Man-(1-&gt;6)]-alpha-D-Man-(1-&gt;6)]-beta-D-Man-(1-&gt;4)-beta-D-GlcNAc-(1-&gt;4)-beta-D-GlcNAc)-L-asparaginyl-[protein] + beta-D-glucose. The protein operates within glycan metabolism; N-glycan metabolism. Inhibited by deoxynojirimycin. Its function is as follows. Catalytic subunit of glucosidase II that cleaves sequentially the 2 innermost alpha-1,3-linked glucose residues from the Glc(2)Man(9)GlcNAc(2) oligosaccharide precursor of immature glycoproteins. Required for PKD1/Polycystin-1 and PKD2/Polycystin-2 maturation and localization to the cell surface and cilia. This is Neutral alpha-glucosidase AB from Homo sapiens (Human).